The following is a 172-amino-acid chain: MEIGQYQPNLEGDGLRIGIVQSRFNEPVCNGLADACVEELERLGVAGEDVLLVSVPGALEIPLALQKLAESGQFDALIALGAVIRGETYHFELVSNESGAGITRIALDFNVPIANAVLTTENDEQAVARMTEKGRDAARVAVEMANLTMALDQLGDDDEDEEEDEDDEEERA.

5-amino-6-(D-ribitylamino)uracil contacts are provided by residues Phe-24, 58–60 (ALE), and 82–84 (AVI). 87 to 88 (ET) is a binding site for (2S)-2-hydroxy-3-oxobutyl phosphate. The active-site Proton donor is His-90. Asn-115 contributes to the 5-amino-6-(D-ribitylamino)uracil binding site. Arg-129 contributes to the (2S)-2-hydroxy-3-oxobutyl phosphate binding site. Residues 150–172 (ALDQLGDDDEDEEEDEDDEEERA) form a disordered region. The segment covering 154–172 (LGDDDEDEEEDEDDEEERA) has biased composition (acidic residues).

It belongs to the DMRL synthase family.

The catalysed reaction is (2S)-2-hydroxy-3-oxobutyl phosphate + 5-amino-6-(D-ribitylamino)uracil = 6,7-dimethyl-8-(1-D-ribityl)lumazine + phosphate + 2 H2O + H(+). It participates in cofactor biosynthesis; riboflavin biosynthesis; riboflavin from 2-hydroxy-3-oxobutyl phosphate and 5-amino-6-(D-ribitylamino)uracil: step 1/2. Its function is as follows. Catalyzes the formation of 6,7-dimethyl-8-ribityllumazine by condensation of 5-amino-6-(D-ribitylamino)uracil with 3,4-dihydroxy-2-butanone 4-phosphate. This is the penultimate step in the biosynthesis of riboflavin. In Burkholderia multivorans (strain ATCC 17616 / 249), this protein is 6,7-dimethyl-8-ribityllumazine synthase.